A 266-amino-acid chain; its full sequence is MPLHYEVHGPADGEAVLLSSGLGGSAAFWQPQLGALLEAGHRVIAYDQRGTGRSPAALDAGYAIADMARDVVQILDATATPRCHLVGHALGGLVGLQLALDEPARVASLVLVNAWSKPNAHSARCFDARLALLDACGPRAYVEAQPIFLYPAAWCAEHAQRVADEVDHAFAHFPGEANMRARIGALRAFDIDARLGAITAPTLVAAAMDDALVPWTCSQRLADGLKDVTLHFLPHGGHAHSVTEAAVFNRSLLDFLARVSAPGVPA.

An AB hydrolase-1 domain is found at 15–128; sequence AVLLSSGLGG…NAHSARCFDA (114 aa).

Belongs to the AB hydrolase superfamily. Hydrolase RutD family.

It catalyses the reaction carbamate + 2 H(+) = NH4(+) + CO2. Involved in pyrimidine catabolism. May facilitate the hydrolysis of carbamate, a reaction that can also occur spontaneously. The chain is Putative carbamate hydrolase RutD from Variovorax paradoxus (strain S110).